The sequence spans 298 residues: MGSATPSRLQKFPATAPADEIYAAFKEDGCVIIEGFVPPDQMARFSQEIQPAMEKIQVQVTNDGNSNDRVKRFSKLVTTSPTFRHEILENDLMHELLQRVFSKPGEGMGYHFNDTMVIEVQPGAPAQRLHRDQELYPWWNSMGPDAPECLVNFFCAVTPFTVENGATRLVPGSNRWPELTLINATDCPQYGKIDSVPAIMQPGDCYMMSGKVIHGAGHNATLSDQRRALAFSTIRRELRPVQAFPLWIPMQIATELSPRTQAMFGFRSSTQHCDVDTVHFWGNDGKDIGEHLGLISSA.

Substrate-binding residues include Arg-72 and Gln-127. The Fe cation site is built by His-130 and Asp-132. Thr-167 lines the substrate pocket. His-214 lines the Fe cation pocket. Arg-226 lines the substrate pocket.

The protein belongs to the PhyH family. As to quaternary structure, homodimer. The cofactor is Fe cation.

It catalyses the reaction preaustinoid A1 + 2-oxoglutarate + O2 = preaustinoid A2 + succinate + CO2 + H2O. It carries out the reaction preaustinoid A2 + 2-oxoglutarate + O2 = preaustinoid A3 + succinate + CO2 + H2O. The enzyme catalyses berkeleyone A + 2-oxoglutarate + O2 = preaustinoid A + succinate + CO2 + H2O. It functions in the pathway secondary metabolite biosynthesis; terpenoid biosynthesis. Functionally, multifunctional dioxygenase; part of the gene cluster B that mediates the biosynthesis of austinol and dehydroaustinol, two fungal meroterpenoids. The first step of the pathway is the synthesis of 3,5-dimethylorsellinic acid by the polyketide synthase ausA. 3,5-dimethylorsellinic acid is then prenylated by the polyprenyl transferase ausN. Further epoxidation by the FAD-dependent monooxygenase ausM and cyclization by the probable terpene cyclase ausL lead to the formation of protoaustinoid A. Protoaustinoid A is then oxidized to spiro-lactone preaustinoid A3 by the combined action of the FAD-binding monooxygenases ausB and ausC, and the dioxygenase ausE. Acid-catalyzed keto-rearrangement and ring contraction of the tetraketide portion of preaustinoid A3 by ausJ lead to the formation of preaustinoid A4. The aldo-keto reductase ausK, with the help of ausH, is involved in the next step by transforming preaustinoid A4 into isoaustinone which is in turn hydroxylated by the P450 monooxygenase ausI to form austinolide. Finally, the cytochrome P450 monooxygenase ausG modifies austinolide to austinol. Austinol can be further modified to dehydroaustinol which forms a diffusible complex with diorcinol that initiates conidiation. Due to genetic rearrangements of the clusters and the subsequent loss of some enzymes, the end products of the Emericella nidulans austinoid biosynthesis clusters are austinol and dehydroaustinol, even if additional enzymes, such as the O-acetyltransferase ausQ and the cytochrome P450 monooxygenase ausR are still functional. The polypeptide is Multifunctional dioxygenase ausE (Emericella nidulans (strain FGSC A4 / ATCC 38163 / CBS 112.46 / NRRL 194 / M139) (Aspergillus nidulans)).